The chain runs to 99 residues: UPF0122 protein UUR10_0158 (99 aa).

This sequence belongs to the UPF0122 family.

Its function is as follows. Might take part in the signal recognition particle (SRP) pathway. This is inferred from the conservation of its genetic proximity to ftsY/ffh. May be a regulatory protein. The protein is UPF0122 protein UUR10_0158 of Ureaplasma urealyticum serovar 10 (strain ATCC 33699 / Western).